Reading from the N-terminus, the 214-residue chain is Adenylate kinase (214 aa).

10-15 (GAGKGT) provides a ligand contact to ATP. Positions 30-59 (STGDLLREEIANNTELGKQAKKLIDGGNLV) are NMP. AMP contacts are provided by residues threonine 31, arginine 36, 57–59 (NLV), 83–86 (GFPR), and glutamine 90. The tract at residues 124-161 (LRRQCKNCGNIFNLRFIKNFDGKCPKCGSTDIYQRADD) is LID. Position 125 (arginine 125) interacts with ATP. Zn(2+) contacts are provided by cysteine 128 and cysteine 131. 134–135 (IF) lines the ATP pocket. Cysteine 147 and cysteine 150 together coordinate Zn(2+). Residues arginine 158 and arginine 169 each coordinate AMP. Lysine 197 is an ATP binding site.

The protein belongs to the adenylate kinase family. In terms of assembly, monomer.

The protein resides in the cytoplasm. It carries out the reaction AMP + ATP = 2 ADP. It participates in purine metabolism; AMP biosynthesis via salvage pathway; AMP from ADP: step 1/1. Catalyzes the reversible transfer of the terminal phosphate group between ATP and AMP. Plays an important role in cellular energy homeostasis and in adenine nucleotide metabolism. The polypeptide is Adenylate kinase (Elusimicrobium minutum (strain Pei191)).